The following is a 416-amino-acid chain: Neurotensin receptor type 2 (416 aa).

Residues 1–32 (METSSPWPPRPSPSAGLSLEARLGVDTRLWAK) lie on the Extracellular side of the membrane. A helical membrane pass occupies residues 33–55 (VLFTALYSLIFAFGTAGNALSVH). At 56–64 (VVLKARAGR) the chain is on the cytoplasmic side. A helical membrane pass occupies residues 65 to 87 (PGRLRYHVLSLALSALLLLLVSM). At 88 to 109 (PMELYNFVWSHYPWVFGDLGCR) the chain is on the extracellular side. Cys-108 and Cys-194 are disulfide-bonded. A helical transmembrane segment spans residues 110–131 (GYYFVRELCAYATVLSVASLSA). Residues 132–154 (ERCLAVCQPLRARRLLTPRRTRR) are Cytoplasmic-facing. A helical transmembrane segment spans residues 155–176 (LLSLVWVASLGLALPMAVIMGQ). Residues 177-216 (KHEVESADGEPEPASRVCTVLVSRATLQVFIQVNVLVSFA) are Extracellular-facing. A helical membrane pass occupies residues 217-237 (LPLALTAFLNGITVNHLMALY). Residues 238 to 297 (SQVPSASAQVSSIPSRLELLSEEGLLGFITWRKTLSLGVQASLVRHKDASQIRSLQHSAQ) are Cytoplasmic-facing. Residues 298-318 (VLRAIVAVYVICWLPYHARRL) form a helical membrane-spanning segment. Residues 319 to 337 (MYCYIPDDGWTNELYDFYH) lie on the Extracellular side of the membrane. A helical transmembrane segment spans residues 338–358 (YFYMVTNTLFYVSSAVTPILY). At 359–416 (NAVSSSFRKLFLESLGSLCGEQHSLVPLPQEAPESTTSTYSFRLWGSPRNPSLGEIQV) the chain is on the cytoplasmic side. Cys-377 carries S-palmitoyl cysteine lipidation. Ser-410 is subject to Phosphoserine.

It belongs to the G-protein coupled receptor 1 family. Neurotensin receptor subfamily. NTSR2 sub-subfamily. Abundant in cortex and hypothalamus, and lower levels seen in the heart and intestine.

The protein resides in the cell membrane. Functionally, receptor for the tridecapeptide neurotensin. It is associated with G proteins that activate a phosphatidylinositol-calcium second messenger system. This is Neurotensin receptor type 2 (Ntsr2) from Rattus norvegicus (Rat).